Here is a 510-residue protein sequence, read N- to C-terminus: Probable mannosyl-oligosaccharide alpha-1,2-mannosidase 1B (510 aa).

An N-terminal signal peptide occupies residues 1 to 21; it reads MHFSSLSLPLTALSLVTPSLA. Residues Asn35, Asn95, Asn182, and Asn249 are each glycosylated (N-linked (GlcNAc...) asparagine). A disulfide bond links Cys332 and Cys361. Asn366 is a glycosylation site (N-linked (GlcNAc...) asparagine). Glu375 serves as the catalytic Proton donor. Thr501 is a binding site for Ca(2+).

Belongs to the glycosyl hydrolase 47 family. Monomer. Ca(2+) is required as a cofactor. Requires Mg(2+) as cofactor.

It localises to the cytoplasmic vesicle lumen. It carries out the reaction N(4)-(alpha-D-Man-(1-&gt;2)-alpha-D-Man-(1-&gt;2)-alpha-D-Man-(1-&gt;3)-[alpha-D-Man-(1-&gt;2)-alpha-D-Man-(1-&gt;3)-[alpha-D-Man-(1-&gt;2)-alpha-D-Man-(1-&gt;6)]-alpha-D-Man-(1-&gt;6)]-beta-D-Man-(1-&gt;4)-beta-D-GlcNAc-(1-&gt;4)-beta-D-GlcNAc)-L-asparaginyl-[protein] (N-glucan mannose isomer 9A1,2,3B1,2,3) + 4 H2O = N(4)-(alpha-D-Man-(1-&gt;3)-[alpha-D-Man-(1-&gt;3)-[alpha-D-Man-(1-&gt;6)]-alpha-D-Man-(1-&gt;6)]-beta-D-Man-(1-&gt;4)-beta-D-GlcNAc-(1-&gt;4)-beta-D-GlcNAc)-L-asparaginyl-[protein] (N-glucan mannose isomer 5A1,2) + 4 beta-D-mannose. The enzyme catalyses N(4)-(alpha-D-Man-(1-&gt;2)-alpha-D-Man-(1-&gt;2)-alpha-D-Man-(1-&gt;3)-[alpha-D-Man-(1-&gt;3)-[alpha-D-Man-(1-&gt;2)-alpha-D-Man-(1-&gt;6)]-alpha-D-Man-(1-&gt;6)]-beta-D-Man-(1-&gt;4)-beta-D-GlcNAc-(1-&gt;4)-beta-D-GlcNAc)-L-asparaginyl-[protein] (N-glucan mannose isomer 8A1,2,3B1,3) + 3 H2O = N(4)-(alpha-D-Man-(1-&gt;3)-[alpha-D-Man-(1-&gt;3)-[alpha-D-Man-(1-&gt;6)]-alpha-D-Man-(1-&gt;6)]-beta-D-Man-(1-&gt;4)-beta-D-GlcNAc-(1-&gt;4)-beta-D-GlcNAc)-L-asparaginyl-[protein] (N-glucan mannose isomer 5A1,2) + 3 beta-D-mannose. Its pathway is protein modification; protein glycosylation. Functionally, involved in the maturation of Asn-linked oligosaccharides. Progressively trims alpha-1,2-linked mannose residues from Man(9)GlcNAc(2) to produce Man(5)GlcNAc(2). The chain is Probable mannosyl-oligosaccharide alpha-1,2-mannosidase 1B (mns1B) from Aspergillus flavus (strain ATCC 200026 / FGSC A1120 / IAM 13836 / NRRL 3357 / JCM 12722 / SRRC 167).